We begin with the raw amino-acid sequence, 517 residues long: Bifunctional purine biosynthesis protein PurH (517 aa).

Positions 1–145 (MSPLALVSVS…KNHKDVSVLV (145 aa)) constitute an MGS-like domain.

The protein belongs to the PurH family.

The catalysed reaction is (6R)-10-formyltetrahydrofolate + 5-amino-1-(5-phospho-beta-D-ribosyl)imidazole-4-carboxamide = 5-formamido-1-(5-phospho-D-ribosyl)imidazole-4-carboxamide + (6S)-5,6,7,8-tetrahydrofolate. It carries out the reaction IMP + H2O = 5-formamido-1-(5-phospho-D-ribosyl)imidazole-4-carboxamide. Its pathway is purine metabolism; IMP biosynthesis via de novo pathway; 5-formamido-1-(5-phospho-D-ribosyl)imidazole-4-carboxamide from 5-amino-1-(5-phospho-D-ribosyl)imidazole-4-carboxamide (10-formyl THF route): step 1/1. The protein operates within purine metabolism; IMP biosynthesis via de novo pathway; IMP from 5-formamido-1-(5-phospho-D-ribosyl)imidazole-4-carboxamide: step 1/1. The sequence is that of Bifunctional purine biosynthesis protein PurH from Prochlorococcus marinus (strain MIT 9301).